Here is a 259-residue protein sequence, read N- to C-terminus: UPF0246 protein Pmen_1032 (259 aa).

Belongs to the UPF0246 family.

In Ectopseudomonas mendocina (strain ymp) (Pseudomonas mendocina), this protein is UPF0246 protein Pmen_1032.